The primary structure comprises 331 residues: MNAPQTNDTAADVATIEASAAEVGRRALTRREQKEAYEDNKLFKRIVRQVGQAIGDYNMIEDGDKVMVCLSGGKDSYAMLDILLRLRERAPIDFDIVAVNLDQKQPGFPEHVLPEYLTQIGVPFHIENQDTYSIVKRLVPEGKTTCSLCSRLRRGILYRVAGELGATKIALGHHRDDIVQTLLLNMFYGGKLKGMPPKLQSDDGKNVVIRPLAYVKETDLEKYAELREFPIIPCNLCGSQPNLKRAEMKALIREWDKRFPGRVDNMFNALANVVPSHLMDTTLFPFASLRATGQADPQGDIAFDEEPCASGDETAAPGGAKPISIVQFDDL.

The PP-loop motif signature appears at 71–76; that stretch reads SGGKDS. [4Fe-4S] cluster-binding residues include C146, C149, and C237.

The protein belongs to the TtcA family. As to quaternary structure, homodimer. Mg(2+) serves as cofactor. Requires [4Fe-4S] cluster as cofactor.

It localises to the cytoplasm. The catalysed reaction is cytidine(32) in tRNA + S-sulfanyl-L-cysteinyl-[cysteine desulfurase] + AH2 + ATP = 2-thiocytidine(32) in tRNA + L-cysteinyl-[cysteine desulfurase] + A + AMP + diphosphate + H(+). Its pathway is tRNA modification. Catalyzes the ATP-dependent 2-thiolation of cytidine in position 32 of tRNA, to form 2-thiocytidine (s(2)C32). The sulfur atoms are provided by the cysteine/cysteine desulfurase (IscS) system. The protein is tRNA-cytidine(32) 2-sulfurtransferase of Burkholderia multivorans (strain ATCC 17616 / 249).